Reading from the N-terminus, the 79-residue chain is Protein OPG081 (79 aa).

Topologically, residues 2–8 are intravirion; it reads VDAITVL. The chain crosses the membrane as a helical span at residues 9–29; it reads TAICITVLMLLMVISGTAMIV. Residues 30–47 are Virion surface-facing; sequence KELNPNDIFTMQSLKFNR. The chain crosses the membrane as a helical span at residues 48 to 68; that stretch reads TVTIFKYIGLFIYIPGTIILY. Topologically, residues 69-79 are intravirion; sequence ATYVKSLLMKN.

The protein belongs to the orthopoxvirus OPG081 family.

The protein resides in the virion membrane. In terms of biological role, envelope protein. The chain is Protein OPG081 (OPG081) from Cynomys gunnisoni (Gunnison's prairie dog).